The following is a 460-amino-acid chain: Probable argininosuccinate lyase (460 aa).

2-(N(omega)-L-arginino)succinate contacts are provided by S26, N114, and T159. H160 serves as the catalytic Proton acceptor. Catalysis depends on S281, which acts as the Proton donor. Residues N289, Y321, Q326, and K329 each coordinate 2-(N(omega)-L-arginino)succinate.

This sequence belongs to the lyase 1 family. Argininosuccinate lyase subfamily. As to quaternary structure, homotetramer.

The catalysed reaction is 2-(N(omega)-L-arginino)succinate = fumarate + L-arginine. It participates in amino-acid biosynthesis; L-arginine biosynthesis; L-arginine from L-ornithine and carbamoyl phosphate: step 3/3. This Schizosaccharomyces pombe (strain 972 / ATCC 24843) (Fission yeast) protein is Probable argininosuccinate lyase (argx).